The following is a 766-amino-acid chain: Tetratricopeptide repeat protein 14 (766 aa).

A disordered region spans residues 35–55; that stretch reads LGTAAEPARGAAPPPGAGRKE. The S1 motif domain maps to 125–207; it reads GDIVIGRISS…YHEKLAVSLY (83 aa). TPR repeat units follow at residues 209–242, 306–339, 341–373, and 381–414; these read SSLP…NSNS, ALKC…DKQN, EALV…CPTH, and CQTL…DETF. Residues 463 to 743 form a disordered region; the sequence is EEKRLKKKRR…PDSRVKKNLP (281 aa). Residues 475–496 are compositionally biased toward low complexity; sequence SSSSSVSSADESVSSSSSSSSS. Over residues 497 to 506 the composition is skewed to basic residues; that stretch reads SHKRHKKSKR. Over residues 539 to 550 the composition is skewed to polar residues; that stretch reads PTNTSASFLNQK. Residues 551–562 are compositionally biased toward basic and acidic residues; the sequence is QEVEKLLEKQDR. The span at 594-605 shows a compositional bias: polar residues; sequence FYNSYKTQAGSS. Basic and acidic residues-rich tracts occupy residues 606 to 616 and 629 to 657; these read KTEKPYKSERH and NSED…RRWE. Positions 661–673 are enriched in polar residues; it reads VKYSTSPASSDYS. Serine 666 carries the phosphoserine modification. Over residues 707 to 738 the composition is skewed to basic and acidic residues; it reads RVYEKEDSCGEGNRNEAPEEMLNSKEQPDSRV.

It belongs to the TTC14 family.

This Mus musculus (Mouse) protein is Tetratricopeptide repeat protein 14.